A 593-amino-acid chain; its full sequence is Aspartate--tRNA ligase (593 aa).

E180 is an L-aspartate binding site. An aspartate region spans residues Q204–K207. R226 is a binding site for L-aspartate. ATP-binding positions include R226–E228 and Q235. H453 contacts L-aspartate. E487 contacts ATP. R494 contacts L-aspartate. G539–R542 is an ATP binding site.

This sequence belongs to the class-II aminoacyl-tRNA synthetase family. Type 1 subfamily. In terms of assembly, homodimer.

It is found in the cytoplasm. The enzyme catalyses tRNA(Asp) + L-aspartate + ATP = L-aspartyl-tRNA(Asp) + AMP + diphosphate. Its function is as follows. Catalyzes the attachment of L-aspartate to tRNA(Asp) in a two-step reaction: L-aspartate is first activated by ATP to form Asp-AMP and then transferred to the acceptor end of tRNA(Asp). The polypeptide is Aspartate--tRNA ligase (Clostridium botulinum (strain 657 / Type Ba4)).